The following is a 299-amino-acid chain: Glycine--tRNA ligase alpha subunit (299 aa).

It belongs to the class-II aminoacyl-tRNA synthetase family. As to quaternary structure, tetramer of two alpha and two beta subunits.

It is found in the cytoplasm. It carries out the reaction tRNA(Gly) + glycine + ATP = glycyl-tRNA(Gly) + AMP + diphosphate. The protein is Glycine--tRNA ligase alpha subunit (glyQ) of Synechocystis sp. (strain ATCC 27184 / PCC 6803 / Kazusa).